We begin with the raw amino-acid sequence, 269 residues long: NAD kinase (269 aa).

The active-site Proton acceptor is the Asp-45. Residues 45–46 (DG), 121–122 (NE), Arg-147, Asp-149, 160–165 (TAYNRS), and Ala-184 contribute to the NAD(+) site.

It belongs to the NAD kinase family. A divalent metal cation serves as cofactor.

It localises to the cytoplasm. It catalyses the reaction NAD(+) + ATP = ADP + NADP(+) + H(+). Its function is as follows. Involved in the regulation of the intracellular balance of NAD and NADP, and is a key enzyme in the biosynthesis of NADP. Catalyzes specifically the phosphorylation on 2'-hydroxyl of the adenosine moiety of NAD to yield NADP. The chain is NAD kinase from Pediococcus pentosaceus (strain ATCC 25745 / CCUG 21536 / LMG 10740 / 183-1w).